A 1464-amino-acid polypeptide reads, in one-letter code: Nuclear pore complex protein NUP155 (1464 aa).

S2 carries the N-acetylserine modification.

It belongs to the non-repetitive/WGA-negative nucleoporin family. In terms of assembly, part of the nuclear pore complex (NPC). The NPC has an eight-fold symmetrical structure comprising a central transport channel and two rings, the cytoplasmic and nuclear rings, to which eight filaments are attached. The cytoplasmic filaments have loose ends, while the nuclear filaments are joined in a distal ring, forming a nuclear basket. NPCs are highly dynamic in configuration and composition, and can be devided in 3 subcomplexes, the NUP62 subcomplex, the NUP107-160 subcomplex and the NUP93 subcomplex, containing approximately 30 different nucleoporin proteins.

The protein localises to the nucleus. The protein resides in the nuclear pore complex. In terms of biological role, major component of the nuclear pore complex (NPC). This Arabidopsis thaliana (Mouse-ear cress) protein is Nuclear pore complex protein NUP155.